Here is a 38-residue protein sequence, read N- to C-terminus: Esterase-5 (38 aa).

The tract at residues 1–38 is disordered; sequence SAAADPLIVELPNGKVRGRDNEGYYEAEGIPRAEPPVG.

The protein belongs to the type-B carboxylesterase/lipase family.

It catalyses the reaction a carboxylic ester + H2O = an alcohol + a carboxylate + H(+). This Drosophila mojavensis (Fruit fly) protein is Esterase-5 (Est-5).